A 310-amino-acid polypeptide reads, in one-letter code: Ribosomal protein uL3 glutamine methyltransferase (310 aa).

This sequence belongs to the protein N5-glutamine methyltransferase family. PrmB subfamily.

The enzyme catalyses L-glutaminyl-[ribosomal protein uL3] + S-adenosyl-L-methionine = N(5)-methyl-L-glutaminyl-[ribosomal protein uL3] + S-adenosyl-L-homocysteine + H(+). Functionally, specifically methylates large ribosomal subunit protein uL3 on 'Gln-150'. The chain is Ribosomal protein uL3 glutamine methyltransferase from Shigella dysenteriae serotype 1 (strain Sd197).